We begin with the raw amino-acid sequence, 265 residues long: Signal peptidase I (265 aa).

Topologically, residues 1–19 (MQIDTKTNTNKTTAQEWKS) are cytoplasmic. The helical transmembrane segment at 20 to 40 (FAFVVCIALLIRILIMEPFTV) threads the bilayer. Residues 41–265 (PTGSMKATIL…IFRNLYNTDE (225 aa)) are Periplasmic-facing. Residues serine 44 and lysine 107 contribute to the active site.

Belongs to the peptidase S26 family.

Its subcellular location is the cell inner membrane. It catalyses the reaction Cleavage of hydrophobic, N-terminal signal or leader sequences from secreted and periplasmic proteins.. The sequence is that of Signal peptidase I (lepB) from Rickettsia canadensis (strain McKiel).